A 225-amino-acid polypeptide reads, in one-letter code: Uracil-DNA glycosylase (225 aa).

Asp-65 serves as the catalytic Proton acceptor.

It belongs to the uracil-DNA glycosylase (UDG) superfamily. UNG family.

It localises to the cytoplasm. It catalyses the reaction Hydrolyzes single-stranded DNA or mismatched double-stranded DNA and polynucleotides, releasing free uracil.. Excises uracil residues from the DNA which can arise as a result of misincorporation of dUMP residues by DNA polymerase or due to deamination of cytosine. This Alkaliphilus oremlandii (strain OhILAs) (Clostridium oremlandii (strain OhILAs)) protein is Uracil-DNA glycosylase.